Reading from the N-terminus, the 92-residue chain is SPQIQVYTRHPPENGKPNILNCYVSQFHPPHIEIEMLKNGKKIPEIEMSDLSFSKDWSFYILAHTEFTPTDSDTYSCRVTHVSMKEPKTVNW.

The 90-residue stretch at Pro2–Asn91 folds into the Ig-like C1-type domain. A disulfide bridge links Cys22 with Cys77.

It belongs to the beta-2-microglobulin family. As to quaternary structure, heterodimer of an alpha chain and a beta chain. Beta-2-microglobulin is the beta-chain of major histocompatibility complex class I molecules.

Its subcellular location is the secreted. Its function is as follows. Component of the class I major histocompatibility complex (MHC). Involved in the presentation of peptide antigens to the immune system. The chain is Beta-2-microglobulin (B2m) from Mus caroli (Ryukyu mouse).